Reading from the N-terminus, the 63-residue chain is UPF0434 protein BAV2101 (63 aa).

The protein belongs to the UPF0434 family.

The protein is UPF0434 protein BAV2101 of Bordetella avium (strain 197N).